The chain runs to 91 residues: Potassium channel toxin Meg-beta-KTx1 (91 aa).

The signal sequence occupies residues 1–19; sequence MQRNLVVLLFLGMVALSSC. A propeptide spanning residues 20 to 27 is cleaved from the precursor; the sequence is GLREKHFQ. The BetaSPN-type CS-alpha/beta domain maps to 54–91; it reads QFGCPAYQGYCDDHCQDIKKQEGFCHGFKCKCGIPMGF. 3 cysteine pairs are disulfide-bonded: C57–C78, C64–C83, and C68–C85.

This sequence belongs to the long chain scorpion toxin family. Class 1 subfamily. Expressed by the venom gland.

It is found in the secreted. Inhibits voltage-gated potassium channel. This chain is Potassium channel toxin Meg-beta-KTx1, found in Mesobuthus gibbosus (Mediterranean checkered scorpion).